The primary structure comprises 449 residues: MPKNKKRNAPHRGGGGGGGSGAATSAATAGGPHRTVQPFSDEDASIETMSHCSGYSDPSSFAEDGPEVLDEEGTQEDLEYKLKGLIDLTLDKSAKTRQAALEGLKNALSSKVLYEFVLERRMTLTDSIERCLKKGKSDEQRAAAAVASVLCIQLGPGFESEEILKTLGPILKKIICDGAASIQARQTCATCFGVCCFIATDDITELYSTLECFENIFTKSYLKEKDTNVTCSTPNTVLHISSLLAWTLLLTICPINEVKKKLELHFHKLPSLLSCDDVNMRIAAGESLALLFELARGMESDFFYEDMDSLTQMLRALATDGNKHRAKVDKRKQRSVFRDVLRAVEERDFPTETVKFGPERMYIDSWVKKHTYDTFKEVLGSGMQYHLQTNEFLRNVFELGPPVMLDAATLKTMKISRFERHLYNSAAFKARTKARSKCRDKRADVGEFL.

Positions Met-1 to Pro-10 are enriched in basic residues. Residues Met-1–Glu-42 form a disordered region. Gly residues predominate over residues Arg-12–Gly-21. The span at Ala-22 to Gly-31 shows a compositional bias: low complexity.

It belongs to the IFRD family. As to quaternary structure, interacts with PSIP1/LEDGF.

Its function is as follows. Could play a role in regulating gene activity in the proliferative and/or differentiative pathways induced by NGF. May be an autocrine factor that attenuates or amplifies the initial ligand-induced signal. This chain is Interferon-related developmental regulator 1 (Ifrd1), found in Mus musculus (Mouse).